The chain runs to 188 residues: MIRFEIHGDNLTITDAIRNYIEDKVGKLERYFTNVPNVNAHVKVKTYANSSTKIEVTIPLNDVTLRAEERNDDLYAGIDLITNKLERQVRKYKTRVNRKKRKESEHEPFPATPETPPETAVDHDKDDEIEIIRSKQFSLKPMDSEEAVLQMDLLGHDFFIFNDRETDGTSIVYRRKDGKYGLIETVEN.

Positions 93–125 (KTRVNRKKRKESEHEPFPATPETPPETAVDHDK) are disordered.

The protein belongs to the HPF/YfiA ribosome-associated protein family. Long HPF subfamily. Interacts with 100S ribosomes.

It localises to the cytoplasm. Its function is as follows. Required for dimerization of active 70S ribosomes into 100S ribosomes in stationary phase; 100S ribosomes are translationally inactive and sometimes present during exponential growth. The protein is Ribosome hibernation promotion factor of Staphylococcus carnosus (strain TM300).